The chain runs to 59 residues: Large ribosomal subunit protein uL30 (59 aa).

Belongs to the universal ribosomal protein uL30 family. In terms of assembly, part of the 50S ribosomal subunit.

The sequence is that of Large ribosomal subunit protein uL30 from Acetivibrio thermocellus (strain ATCC 27405 / DSM 1237 / JCM 9322 / NBRC 103400 / NCIMB 10682 / NRRL B-4536 / VPI 7372) (Clostridium thermocellum).